A 354-amino-acid chain; its full sequence is 3'-5' exonuclease (354 aa).

A disordered region spans residues 1–120 (MEKYLIKMPI…PSPEKEKPEK (120 aa)). Residues 36–50 (TKKDTPKELKDKENA) are compositionally biased toward basic and acidic residues. Residues 59–70 (TKGRPGRPAVKR) are compositionally biased toward basic residues. The segment covering 71–91 (KNLDNPDAKAEKKATEEENPP) has biased composition (basic and acidic residues). A phosphoserine mark is found at Ser104, Ser110, and Ser112. The region spanning 146–314 (VLQWVEKQKD…GQVIYRELER (169 aa)) is the 3'-5' exonuclease domain. 3 residues coordinate Mg(2+): Asp163, Glu165, and Asp301.

This sequence belongs to the WRNexo family.

The protein localises to the nucleus. Has exonuclease activity on both single-stranded and duplex templates bearing overhangs, but not blunt ended duplex DNA, and cleaves in a 3'-5' direction. Essential for the formation of DNA replication focal centers. Has an important role in maintaining genome stability. This chain is 3'-5' exonuclease, found in Drosophila yakuba (Fruit fly).